The chain runs to 315 residues: Malate dehydrogenase (315 aa).

NAD(+) contacts are provided by residues 10–15 and Asp-34; that span reads GSGFTG. Residues Arg-85 and Arg-91 each coordinate substrate. NAD(+)-binding positions include Asn-98 and 121-123; that span reads LTN. The substrate site is built by Asn-123 and Arg-154. Catalysis depends on His-178, which acts as the Proton acceptor.

Belongs to the LDH/MDH superfamily. MDH type 3 family.

It carries out the reaction (S)-malate + NAD(+) = oxaloacetate + NADH + H(+). Catalyzes the reversible oxidation of malate to oxaloacetate. The polypeptide is Malate dehydrogenase (Symbiobacterium thermophilum (strain DSM 24528 / JCM 14929 / IAM 14863 / T)).